Consider the following 317-residue polypeptide: ADP-L-glycero-D-manno-heptose-6-epimerase (317 aa).

NADP(+) is bound by residues phenylalanine 10 to isoleucine 11, aspartate 31 to aspartate 32, lysine 38, lysine 53, glutamine 76 to serine 80, and asparagine 93. Tyrosine 140 acts as the Proton acceptor in catalysis. Lysine 144 lines the NADP(+) pocket. Position 169 (asparagine 169) interacts with substrate. The NADP(+) site is built by isoleucine 170 and lysine 178. Lysine 178 functions as the Proton acceptor in the catalytic mechanism. Residues alanine 180, histidine 187, phenylalanine 201 to cysteine 204, arginine 214, and tyrosine 278 contribute to the substrate site.

It belongs to the NAD(P)-dependent epimerase/dehydratase family. HldD subfamily. In terms of assembly, homopentamer. NADP(+) serves as cofactor.

It catalyses the reaction ADP-D-glycero-beta-D-manno-heptose = ADP-L-glycero-beta-D-manno-heptose. It participates in nucleotide-sugar biosynthesis; ADP-L-glycero-beta-D-manno-heptose biosynthesis; ADP-L-glycero-beta-D-manno-heptose from D-glycero-beta-D-manno-heptose 7-phosphate: step 4/4. Functionally, catalyzes the interconversion between ADP-D-glycero-beta-D-manno-heptose and ADP-L-glycero-beta-D-manno-heptose via an epimerization at carbon 6 of the heptose. This Nitrosococcus oceani (strain ATCC 19707 / BCRC 17464 / JCM 30415 / NCIMB 11848 / C-107) protein is ADP-L-glycero-D-manno-heptose-6-epimerase.